A 5085-amino-acid polypeptide reads, in one-letter code: Protein piccolo (5085 aa).

Low complexity predominate over residues 1 to 20 (MGNEASLEGEGLPEGLAAAA). Disordered regions lie at residues 1 to 142 (MGNE…DFKE) and 173 to 516 (DLIS…TPAQ). Over residues 92-101 (PGKPPDPGRP) the composition is skewed to pro residues. 3 stretches are compositionally biased toward basic and acidic residues: residues 110–121 (RTTDTFRSEQKL), 132–142 (KESKSRTDFKE), and 184–198 (ETTKKQKVVQKEQGK). 2 positions are modified to phosphoserine: S211 and S231. The segment covering 227–240 (QQDSSPKSVSSQQA) has biased composition (polar residues). Positions 253 to 268 (PSQQSPAQTPAQQASP) are enriched in low complexity. Polar residues-rich tracts occupy residues 275-285 (QPGSAKATVQQ), 318-332 (KTSSSQQPGPKSLAQ), and 375-391 (TPAQQSGPGKTPAQQPG). The tract at residues 372–491 (PTKTPAQQSG…LAKPSAQQPT (120 aa)) is 12 X 10 AA tandem approximate repeats of P-A-K-P-Q-P-Q-Q-P-X. Positions 392-408 (PTKPSPQQPIPAKPQPQ) are enriched in pro residues. Positions 409–423 (QPVATKTQPQQSAPA) are enriched in low complexity. A compositionally biased stretch (pro residues) spans 424 to 472 (KPQPQQPAPAKPQPQQPTPAKPQPQPPTPAKPQPQPPTATKPQPQPPTA). Over residues 486-499 (SAQQPTKSISQTVT) the composition is skewed to polar residues. Residues 523–547 (CPLCNTTELLLHIPEKANFNTCTEC) form a C4-type zinc finger. Disordered stretches follow at residues 586–880 (AAIP…TVTG), 896–1012 (LIST…ACPL), 1069–1357 (QLGD…PSDL), 1373–1604 (STLV…EELV), and 1622–1815 (TIAD…SDPE). A compositionally biased stretch (low complexity) spans 596 to 613 (PKAATAPTATASKSPVPS). The segment covering 618–654 (PKKEPPSKQDSPKALESKKPPEPKKPPEPKKPPEPKK) has biased composition (basic and acidic residues). The segment covering 672 to 682 (APQLPVAEALP) has biased composition (low complexity). A compositionally biased stretch (pro residues) spans 683 to 693 (EPAPPKEPSGP). The span at 705 to 717 (VEPKQPKMTETRA) shows a compositional bias: basic and acidic residues. Over residues 718–767 (DIQSSSTTKPDILSSQVQSQAQVKTASPLKTDSAKPSQSFPPTGEKTTPL) the composition is skewed to polar residues. Residues 790–808 (ESKDPKHIDPIQKKDEPKK) are compositionally biased toward basic and acidic residues. S857 and S869 each carry phosphoserine. Composition is skewed to polar residues over residues 867-878 (PKSQPTTPQETV), 896-906 (LISTAGQQGPH), and 917-936 (QAPTPSQSPAAQGPAKSTGQ). Phosphothreonine is present on T873. Over residues 990–1004 (EPEKAVPAHKPDKTT) the composition is skewed to basic and acidic residues. The segment at 1010-1033 (CPLCRTELNLGSQEPPNFNTCTEC) adopts a C4-type zinc-finger fold. Pro residues predominate over residues 1077 to 1092 (PPAPSGPKASPMPAPA). Over residues 1110-1129 (KEAEGKTEAEKPVPEKETAS) the composition is skewed to basic and acidic residues. Residue T1133 is modified to Phosphothreonine. 3 stretches are compositionally biased toward basic and acidic residues: residues 1141-1150 (QKLEESEGKK), 1157-1199 (PEKK…KLPP), and 1274-1295 (SSKDGQGERSKEKTEKEEDKSD). Over residues 1300-1318 (QQPKSPQGLSDTGYSSDGI) the composition is skewed to polar residues. Phosphoserine occurs at positions 1304, 1314, 1315, 1344, 1346, 1349, 1350, and 1353. Residues 1331–1345 (SDEKDLLKGLKKDSF) are compositionally biased toward basic and acidic residues. A compositionally biased stretch (low complexity) spans 1346-1355 (SQESSPSSPS). Over residues 1378 to 1396 (EKAEKKTQPQKISPEKPQD) the composition is skewed to basic and acidic residues. Positions 1397-1407 (QQKTQTASETL) are enriched in polar residues. Residues 1417-1456 (KESQEKKVSPKKDSEQGFPSRKEHKEKPELVDDLSPRRAS) show a composition bias toward basic and acidic residues. A phosphoserine mark is found at S1451, S1463, S1464, S1466, S1469, S1493, S1496, S1517, and S1519. The span at 1511-1523 (SADEDASGSEDEE) shows a compositional bias: acidic residues. Phosphothreonine is present on T1564. A phosphoserine mark is found at S1565, S1575, and S1587. Residues 1578 to 1587 (DEDDETFDES) are compositionally biased toward acidic residues. The span at 1588–1599 (PELKFRETKSQE) shows a compositional bias: basic and acidic residues. Polar residues predominate over residues 1622–1635 (TIADKYSSESSQKK). The segment covering 1640 to 1650 (FDEEPELEMES) has biased composition (acidic residues). A Phosphoserine modification is found at S1650. T1652 carries the phosphothreonine modification. Phosphoserine is present on residues S1654 and S1659. The segment covering 1662–1679 (EGSSSLHASSFTPGTSPT) has biased composition (polar residues). Positions 1719-1732 (DSSEEEELREEEEL) are enriched in acidic residues. Phosphoserine occurs at positions 1720 and 1721. Positions 1733-1746 (LKEQEKQRELEQQQ) are enriched in basic and acidic residues. At T1772 the chain carries Phosphothreonine. A Phosphoserine modification is found at S1778. Basic and acidic residues predominate over residues 1787–1802 (EELRQAAEMEELHRSS). Residues S1807, S1812, S1820, and S1841 each carry the phosphoserine modification. 3 disordered regions span residues 2116–2139 (PSESATSVPPSDTPSLTSSISSVC), 2275–2385 (ELTK…PTYP), and 2456–2486 (KPPIAPKPAVPQIPVTTQKPTDTCPKPTGLS). Over residues 2121–2139 (TSVPPSDTPSLTSSISSVC) the composition is skewed to low complexity. Residues 2350–2384 (QPPPPPPPPPPSPSTSSPPPTPPLPPATSPKPPTY) are compositionally biased toward pro residues. At S2511 the chain carries Phosphoserine. T2702 carries O-linked (GlcNAc) threonine glycosylation. Residue S2976 is glycosylated (O-linked (GlcNAc) serine). T3014 bears the Phosphothreonine mark. 2 disordered regions span residues 3350-3457 (KEEK…PLSK) and 3503-3572 (KTYK…LYSP). A Phosphoserine modification is found at S3374. A compositionally biased stretch (basic and acidic residues) spans 3377 to 3386 (DDPRNLKKIV). Phosphoserine is present on S3388. Phosphothreonine is present on residues T3392 and T3419. Residues 3419–3428 (TDDEDQDEWD) are compositionally biased toward acidic residues. A compositionally biased stretch (polar residues) spans 3511–3523 (GCQTETDSDTQSP). Residues S3522, S3530, S3561, S3565, S3571, S3574, S3577, S3598, S3624, S3626, and S3632 each carry the phosphoserine modification. Disordered stretches follow at residues 3602 to 3695 (VLHP…ASRR) and 3774 to 3816 (AEDR…FIPP). Polar residues-rich tracts occupy residues 3647-3663 (EGFTTKGSQTMTASGTQ) and 3679-3691 (STGTQSTYSTMGT). S3781 carries the phosphoserine modification. Over residues 3791-3803 (SRVESQHGVERPR) the composition is skewed to basic and acidic residues. A compositionally biased stretch (polar residues) spans 3805 to 3816 (APQTEFSQFIPP). S4034 and S4150 each carry phosphoserine. Disordered stretches follow at residues 4225 to 4248 (ADKPYSSGSRSRPSSRPSSVYGLD) and 4272 to 4291 (VSFGHSSSSARTKPTSLPIS). Low complexity predominate over residues 4228–4248 (PYSSGSRSRPSSRPSSVYGLD). Over residues 4275 to 4291 (GHSSSSARTKPTSLPIS) the composition is skewed to polar residues. Phosphoserine occurs at positions 4304, 4308, 4311, 4340, and 4376. Residues 4335-4357 (RDQFGSSHSLPEVQQHMREESRT) form a disordered region. Residues 4442–4536 (RVKITRDFKD…EAEICVRLDL (95 aa)) form the PDZ domain. Residues 4589–4638 (VEKGSHAHSGPTSAGSSSVPSPGQPGSPSVSKKKHSSTKPTDGPKAASHP) form a disordered region. Residues 4595-4618 (AHSGPTSAGSSSVPSPGQPGSPSV) show a composition bias toward low complexity. Phosphoserine is present on S4609. Positions 4639-4768 (ITGEIQLQIN…SHLDNTPRWY (130 aa)) constitute a C2 1 domain. D4668 and D4674 together coordinate Ca(2+). Residue S4723 is modified to Phosphoserine. D4738, D4740, S4743, and D4746 together coordinate Ca(2+). 2 disordered regions span residues 4775–4851 (ESID…SVAQ) and 4874–4908 (QPTKPTNHRPAESSVSTGSSGSSVGSGYSVDSEGS). Low complexity-rich tracts occupy residues 4783 to 4795 (HSSQNSQQSPKPS) and 4822 to 4832 (SSPGSSKSSSE). A compositionally biased stretch (polar residues) spans 4840–4851 (PSRSQSKTSVAQ). Low complexity predominate over residues 4886-4908 (SSVSTGSSGSSVGSGYSVDSEGS). The C2 2 domain occupies 4950–5075 (VMGEIKLALK…DLRKRIVNWH (126 aa)).

In terms of assembly, interacts with BSN, ERC2/CAST1, RIMS1 and UNC13A. Interacts (via C-terminus) with TRIO (via N-terminus). Interacts with CTBP1. Interacts with SIAH1; this interaction negatively regulates SIAH1 E3 ligase activity. Directly interacts with GIT1 and GIT2. Requires Ca(2+) as cofactor. As to expression, expressed in brain (at protein level).

The protein resides in the presynaptic active zone. Scaffold protein of the presynaptic cytomatrix at the active zone (CAZ) which is the place in the synapse where neurotransmitter is released. After synthesis, participates in the formation of Golgi-derived membranous organelles termed Piccolo-Bassoon transport vesicles (PTVs) that are transported along axons to sites of nascent synaptic contacts. At the presynaptic active zone, regulates the spatial organization of synaptic vesicle cluster, the protein complexes that execute membrane fusion and compensatory endocytosis. Organizes as well the readily releasable pool of synaptic vesicles and safeguards a fraction of them to be not immediately available for action potential-induced release. Also functions in processes other than assembly such as the regulation of specific presynaptic protein ubiquitination by interacting with SIAH1 or the regulation of presynaptic autophagy. Also mediates synapse to nucleus communication leading to reconfiguration of gene expression by associating with the transcriptional corepressor CTBP1 and by subsequently reducing the size of its pool available for nuclear import. In Rattus norvegicus (Rat), this protein is Protein piccolo (Pclo).